We begin with the raw amino-acid sequence, 386 residues long: D-galactosamine-6-phosphate deaminase AgaS (386 aa).

SIS domains are found at residues 59–217 (LTPI…CIEM) and 222–366 (LTER…PDNP).

The protein belongs to the SIS family. AgaS subfamily.

The protein resides in the cytoplasm. The enzyme catalyses D-galactosamine 6-phosphate + H2O = D-tagatopyranose 1-phosphate + NH4(+). It catalyses the reaction alpha-D-glucosamine 6-phosphate + H2O = beta-D-fructose 6-phosphate + NH4(+). In terms of biological role, involved in the pathway of N-acetyl-D-galactosamine degradation. Catalyzes the conversion of D-galactosamine 6-phosphate (GalN-6-P) to D-tagatofuranose 6-phosphate (Tag-6-P). It can also catalyze the conversion of D-glucosamine 6-phosphate. This Shewanella sp. (strain ANA-3) protein is D-galactosamine-6-phosphate deaminase AgaS.